Reading from the N-terminus, the 665-residue chain is tRNA 5-methylaminomethyl-2-thiouridine biosynthesis bifunctional protein MnmC (665 aa).

Residues 1-243 (MSQTSLHHAR…KWAMLAGERV (243 aa)) form a tRNA (mnm(5)s(2)U34)-methyltransferase region. Positions 268-665 (IGGGIASAMT…RKLLKGKPLN (398 aa)) are FAD-dependent cmnm(5)s(2)U34 oxidoreductase.

The protein in the N-terminal section; belongs to the methyltransferase superfamily. tRNA (mnm(5)s(2)U34)-methyltransferase family. It in the C-terminal section; belongs to the DAO family. The cofactor is FAD.

The protein resides in the cytoplasm. The catalysed reaction is 5-aminomethyl-2-thiouridine(34) in tRNA + S-adenosyl-L-methionine = 5-methylaminomethyl-2-thiouridine(34) in tRNA + S-adenosyl-L-homocysteine + H(+). Its function is as follows. Catalyzes the last two steps in the biosynthesis of 5-methylaminomethyl-2-thiouridine (mnm(5)s(2)U) at the wobble position (U34) in tRNA. Catalyzes the FAD-dependent demodification of cmnm(5)s(2)U34 to nm(5)s(2)U34, followed by the transfer of a methyl group from S-adenosyl-L-methionine to nm(5)s(2)U34, to form mnm(5)s(2)U34. This is tRNA 5-methylaminomethyl-2-thiouridine biosynthesis bifunctional protein MnmC from Aeromonas salmonicida (strain A449).